Here is a 300-residue protein sequence, read N- to C-terminus: SNAP25 homologous protein SNAP33 (300 aa).

2 disordered regions span residues 1–76 (MFGL…QSLF) and 176–228 (WKPK…PESA). Position 29 is a phosphoserine (Ser-29). The span at 38–49 (TLNPSKRTTSEP) shows a compositional bias: polar residues. Positions 190–208 (TRDDSPTRRVNHLEKREKL) are enriched in basic and acidic residues. Residues 235-297 (EMEKAKQDDG…QQSNQRGRRL (63 aa)) form the t-SNARE coiled-coil homology domain.

This sequence belongs to the SNAP-25 family. As to quaternary structure, interacts with the cytokinesis-specific syntaxin KNOLLE and with SYP121. Binds to EXO70B2. In terms of tissue distribution, ubiquitous, with a strong expression in root tips, ovules, very young leaves, vascular tissue, hydathodes, stipules and the abscission and dehiscence zones of the siliques.

It is found in the membrane. Its function is as follows. t-SNARE involved in diverse vesicle trafficking and membrane fusion processes, including cell plate formation. May function in the secretory pathway. The chain is SNAP25 homologous protein SNAP33 from Arabidopsis thaliana (Mouse-ear cress).